The chain runs to 411 residues: UPF0761 membrane protein PSPA7_4558 (411 aa).

6 helical membrane-spanning segments follow: residues leucine 36–phenylalanine 56, histidine 92–isoleucine 112, phenylalanine 132–valine 152, leucine 174–valine 194, glycine 207–phenylalanine 229, and isoleucine 244–cysteine 264.

This sequence belongs to the UPF0761 family.

The protein localises to the cell inner membrane. The chain is UPF0761 membrane protein PSPA7_4558 from Pseudomonas paraeruginosa (strain DSM 24068 / PA7) (Pseudomonas aeruginosa (strain PA7)).